The sequence spans 104 residues: Large ribosomal subunit protein uL24 (104 aa).

Belongs to the universal ribosomal protein uL24 family. Part of the 50S ribosomal subunit.

Functionally, one of two assembly initiator proteins, it binds directly to the 5'-end of the 23S rRNA, where it nucleates assembly of the 50S subunit. In terms of biological role, one of the proteins that surrounds the polypeptide exit tunnel on the outside of the subunit. This is Large ribosomal subunit protein uL24 from Hydrogenovibrio crunogenus (strain DSM 25203 / XCL-2) (Thiomicrospira crunogena).